The following is a 265-amino-acid chain: Protein N-terminal and lysine N-methyltransferase EFM7 (265 aa).

S-adenosyl-L-methionine-binding positions include Trp-55, 81–83 (GAA), Asp-103, Trp-141, and Ala-169.

It belongs to the class I-like SAM-binding methyltransferase superfamily. EFM7 family.

The protein localises to the cytoplasm. Functionally, S-adenosyl-L-methionine-dependent protein methyltransferase that trimethylates the N-terminal glycine 'Gly-2' of elongation factor 1-alpha, before also catalyzing the mono- and dimethylation of 'Lys-3'. The sequence is that of Protein N-terminal and lysine N-methyltransferase EFM7 from Gibberella zeae (strain ATCC MYA-4620 / CBS 123657 / FGSC 9075 / NRRL 31084 / PH-1) (Wheat head blight fungus).